The following is a 257-amino-acid chain: 3-deoxy-manno-octulosonate cytidylyltransferase (257 aa).

Belongs to the KdsB family.

The protein localises to the cytoplasm. The enzyme catalyses 3-deoxy-alpha-D-manno-oct-2-ulosonate + CTP = CMP-3-deoxy-beta-D-manno-octulosonate + diphosphate. Its pathway is nucleotide-sugar biosynthesis; CMP-3-deoxy-D-manno-octulosonate biosynthesis; CMP-3-deoxy-D-manno-octulosonate from 3-deoxy-D-manno-octulosonate and CTP: step 1/1. It participates in bacterial outer membrane biogenesis; lipopolysaccharide biosynthesis. Its function is as follows. Activates KDO (a required 8-carbon sugar) for incorporation into bacterial lipopolysaccharide in Gram-negative bacteria. This chain is 3-deoxy-manno-octulosonate cytidylyltransferase, found in Halorhodospira halophila (strain DSM 244 / SL1) (Ectothiorhodospira halophila (strain DSM 244 / SL1)).